Here is a 676-residue protein sequence, read N- to C-terminus: RNA helicase NPH-II (676 aa).

One can recognise a Helicase ATP-binding domain in the interval 172 to 347 (FSAWISHRPV…VFLPNPAFIH (176 aa)). 185-192 (GGTGVGKT) is an ATP binding site. The DEXH box signature appears at 296–299 (DEVH). A Helicase C-terminal domain is found at 366–535 (NPSSRMAYIE…NYILYANKFN (170 aa)).

This sequence belongs to the DEAD box helicase family. DEAH subfamily. As to quaternary structure, monomer.

It is found in the virion. The enzyme catalyses ATP + H2O = ADP + phosphate + H(+). Functionally, NTP-dependent helicase that catalyzes unidirectional unwinding of 3'tailed duplex RNAs and plays an important role during transcription of early mRNAs, presumably by preventing R-loop formation behind the elongating RNA polymerase. Might also play a role in the export of newly synthesized mRNA chains out of the core into the cytoplasm. Required for replication and propagation of viral particles. The protein is RNA helicase NPH-II (OPG084) of Bos taurus (Bovine).